A 426-amino-acid chain; its full sequence is Glutamate-1-semialdehyde 2,1-aminomutase (426 aa).

At K265 the chain carries N6-(pyridoxal phosphate)lysine.

Belongs to the class-III pyridoxal-phosphate-dependent aminotransferase family. HemL subfamily. Homodimer. Pyridoxal 5'-phosphate is required as a cofactor.

It is found in the cytoplasm. It catalyses the reaction (S)-4-amino-5-oxopentanoate = 5-aminolevulinate. The protein operates within porphyrin-containing compound metabolism; protoporphyrin-IX biosynthesis; 5-aminolevulinate from L-glutamyl-tRNA(Glu): step 2/2. The polypeptide is Glutamate-1-semialdehyde 2,1-aminomutase (Yersinia pestis bv. Antiqua (strain Antiqua)).